The sequence spans 95 residues: UPF0235 protein MS0322 (95 aa).

This sequence belongs to the UPF0235 family.

The protein is UPF0235 protein MS0322 of Mannheimia succiniciproducens (strain KCTC 0769BP / MBEL55E).